A 998-amino-acid chain; its full sequence is Beta-galactosidase (998 aa).

The active-site Proton donor is the Glu-431. The active-site Nucleophile is the Glu-508.

The protein belongs to the glycosyl hydrolase 2 family.

It carries out the reaction Hydrolysis of terminal non-reducing beta-D-galactose residues in beta-D-galactosides.. This is Beta-galactosidase (lacZ) from Lactococcus lactis subsp. lactis (strain IL1403) (Streptococcus lactis).